The primary structure comprises 499 residues: Pentatricopeptide repeat-containing protein At5g61800 (499 aa).

PPR repeat units lie at residues S78–P113, D114–S150, D151–R181, D182–R212, D213–P247, D248–I282, D283–K313, T314–P348, D349–L379, and E385–R419. Residues A424–S499 form a type E motif region.

The protein belongs to the PPR family. PCMP-E subfamily.

The protein is Pentatricopeptide repeat-containing protein At5g61800 (PCMP-E8) of Arabidopsis thaliana (Mouse-ear cress).